Consider the following 110-residue polypeptide: uncharacterized protein (110 aa).

A helical membrane pass occupies residues 88 to 108 (LTRICLLIFGIGLVVLIFLKL).

It localises to the membrane. This is an uncharacterized protein from Rickettsia prowazekii (strain Madrid E).